An 872-amino-acid chain; its full sequence is Telomerase component p95 (872 aa).

2 disordered regions span residues 55–75 (NQDQDGNSGNDDDDEENNSNK) and 471–492 (KNNKNQEETPETKDETPSESTS). Positions 474–486 (KNQEETPETKDET) are enriched in basic and acidic residues.

In terms of assembly, telomerase consist of two subunit, p80 and p95 that form a 1:1:1 complex with the 159 nt telomerase RNA.

It localises to the nucleus. Its subcellular location is the chromosome. The protein localises to the telomere. It catalyses the reaction DNA(n) + a 2'-deoxyribonucleoside 5'-triphosphate = DNA(n+1) + diphosphate. Functionally, ribonucleoprotein DNA polymerase that catalyzes the de novo synthesis of telomeric simple sequence repeats. Subunit p95 contains some or all of the template-independent primer DNA-binding site termed the anchor site. This is Telomerase component p95 from Tetrahymena thermophila.